A 328-amino-acid chain; its full sequence is Phenylalanine--tRNA ligase alpha subunit (328 aa).

E253 is a Mg(2+) binding site.

The protein belongs to the class-II aminoacyl-tRNA synthetase family. Phe-tRNA synthetase alpha subunit type 1 subfamily. As to quaternary structure, tetramer of two alpha and two beta subunits. The cofactor is Mg(2+).

It localises to the cytoplasm. The catalysed reaction is tRNA(Phe) + L-phenylalanine + ATP = L-phenylalanyl-tRNA(Phe) + AMP + diphosphate + H(+). In Chromobacterium violaceum (strain ATCC 12472 / DSM 30191 / JCM 1249 / CCUG 213 / NBRC 12614 / NCIMB 9131 / NCTC 9757 / MK), this protein is Phenylalanine--tRNA ligase alpha subunit.